Here is a 332-residue protein sequence, read N- to C-terminus: D-amino acid oxidase (332 aa).

Positions 8, 9, 10, 39, 40, 45, 46, 47, 161, and 180 each coordinate FAD. Residues Tyr-218 and Arg-274 each contribute to the D-proline site. The D-serine site is built by Tyr-218 and Arg-274. FAD is bound by residues Arg-274, Gly-305, Gly-306, Gly-308, and Thr-310. A D-proline-binding site is contributed by Gly-306. Gly-306 is a D-serine binding site. The Microbody targeting signal motif lies at 330 to 332 (AKL).

The protein belongs to the DAMOX/DASOX family. The cofactor is FAD.

Its subcellular location is the peroxisome matrix. The enzyme catalyses a D-alpha-amino acid + O2 + H2O = a 2-oxocarboxylate + H2O2 + NH4(+). It catalyses the reaction D-alanine + O2 + H2O = pyruvate + H2O2 + NH4(+). It carries out the reaction D-arginine + O2 + H2O = 5-guanidino-2-oxopentanoate + H2O2 + NH4(+). The catalysed reaction is D-asparagine + O2 + H2O = 2-oxosuccinamate + H2O2 + NH4(+). The enzyme catalyses D-cysteine + O2 + H2O = 2-oxo-3-sulfanylpropanoate + H2O2 + NH4(+). It catalyses the reaction D-glutamine + O2 + H2O = 2-oxoglutaramate + H2O2 + NH4(+). It carries out the reaction D-isoleucine + O2 + H2O = (R)-3-methyl-2-oxopentanoate + H2O2 + NH4(+). The catalysed reaction is D-leucine + O2 + H2O = 4-methyl-2-oxopentanoate + H2O2 + NH4(+). The enzyme catalyses D-lysine + O2 + H2O = 6-amino-2-oxohexanoate + H2O2 + NH4(+). It catalyses the reaction D-methionine + O2 + H2O = 4-methylsulfanyl-2-oxobutanoate + H2O2 + NH4(+). It carries out the reaction D-phenylalanine + O2 + H2O = 3-phenylpyruvate + H2O2 + NH4(+). The catalysed reaction is D-proline + O2 = 1-pyrroline-2-carboxylate + H2O2. The enzyme catalyses D-valine + O2 + H2O = 3-methyl-2-oxobutanoate + H2O2 + NH4(+). It catalyses the reaction D-histidine + O2 + H2O = 3-(imidazol-5-yl)pyruvate + H2O2 + NH4(+). It carries out the reaction D-tyrosine + O2 + H2O = 3-(4-hydroxyphenyl)pyruvate + H2O2 + NH4(+). The catalysed reaction is D-serine + O2 + H2O = 3-hydroxypyruvate + H2O2 + NH4(+). The enzyme catalyses D-threonine + O2 + H2O = (S)-3-hydroxy-2-oxobutanoate + H2O2 + NH4(+). It catalyses the reaction D-tryptophan + O2 + H2O = indole-3-pyruvate + H2O2 + NH4(+). In terms of biological role, catalyzes the oxidative deamination of D-amino acids with broad substrate specificity. Could be responsible for the degradation of diet-derived D-alanine in the intestine. Maintains the asexual state of worms and represses early ovarian development. Following sexual induction, the enzyme is required for differentiation of oogonia into oocytes in the developing ovaries. The sequence is that of D-amino acid oxidase from Dugesia ryukyuensis (Freshwater planarian flatworm).